The primary structure comprises 831 residues: Multiphosphoryl transfer protein (831 aa).

Residues Met1–Ser90 form the HPr domain. The Pros-phosphohistidine intermediate; for HPr activity role is filled by His15. His15 bears the Phosphohistidine; by EI mark. The tract at residues Gly119 to Asp650 is PTS EI. The active-site Tele-phosphohistidine intermediate; for PTS EI activity is His298. His298 carries the post-translational modification Phosphohistidine; by autocatalysis. Positions 405 and 441 each coordinate phosphoenolpyruvate. Residues Glu540 and Asp564 each contribute to the Mg(2+) site. Residues Asn563–Asp564 and Arg574 each bind phosphoenolpyruvate. Catalysis depends on Cys611, which acts as the Proton donor; for EI activity. Residues Pro685–Glu828 enclose the PTS EIIA type-2 domain. His747 acts as the Tele-phosphohistidine intermediate; for PTS EIIA activity in catalysis. His747 is subject to Phosphohistidine; by HPr.

This sequence belongs to the PEP-utilizing enzyme family. Mg(2+) is required as a cofactor.

It localises to the cytoplasm. It carries out the reaction L-histidyl-[protein] + phosphoenolpyruvate = N(pros)-phospho-L-histidyl-[protein] + pyruvate. It catalyses the reaction D-fructose(out) + N(pros)-phospho-L-histidyl-[protein] = D-fructose 1-phosphate(in) + L-histidyl-[protein]. In terms of biological role, multifunctional protein that includes general (non sugar-specific) and sugar-specific components of the phosphoenolpyruvate-dependent sugar phosphotransferase system (sugar PTS). This major carbohydrate active transport system catalyzes the phosphorylation of incoming sugar substrates concomitantly with their translocation across the cell membrane. The enzyme II FryABC PTS system is involved in fructose transport. The protein is Multiphosphoryl transfer protein (fryA) of Shigella flexneri.